The sequence spans 252 residues: PHD finger protein ALFIN-LIKE 7 (252 aa).

Residues 141–193 are disordered; the sequence is AKQSKDQSANHNSSRSKSSGGKPRHSESHTKASKMSPPPRKEDESGDEDEDDE. The span at 149 to 161 shows a compositional bias: low complexity; sequence ANHNSSRSKSSGG. Phosphoserine is present on S176. Residues 184-193 are compositionally biased toward acidic residues; the sequence is ESGDEDEDDE. The segment at 195 to 247 adopts a PHD-type zinc-finger fold; that stretch reads GAVCGACGDNYGGDEFWICCDACEKWFHGKCVKITPAKAEHIKHYKCPSCTTS.

Belongs to the Alfin family. As to quaternary structure, interacts with H3K4me3 and to a lesser extent with H3K4me2. As to expression, ubiquitously expressed.

The protein localises to the nucleus. Histone-binding component that specifically recognizes H3 tails trimethylated on 'Lys-4' (H3K4me3), which mark transcription start sites of virtually all active genes. In Arabidopsis thaliana (Mouse-ear cress), this protein is PHD finger protein ALFIN-LIKE 7 (AL7).